A 227-amino-acid polypeptide reads, in one-letter code: Cytochrome c oxidase subunit 2 (227 aa).

Topologically, residues 1-14 (MAYPFQLGFQDATS) are mitochondrial intermembrane. A helical membrane pass occupies residues 15–45 (PIMEELLHFHDHTLMIVFLISSLVLYIISLM). The Mitochondrial matrix portion of the chain corresponds to 46–59 (LTTKLTHTSTMDAQ). The helical transmembrane segment at 60-87 (EVETIWTILPAIILILIALPSLRILYMM) threads the bilayer. Topologically, residues 88 to 227 (DEINNPSLTV…YFEKWSASML (140 aa)) are mitochondrial intermembrane. Residues H161, C196, E198, C200, H204, and M207 each coordinate Cu cation. E198 is a binding site for Mg(2+). The residue at position 218 (Y218) is a Phosphotyrosine.

Belongs to the cytochrome c oxidase subunit 2 family. In terms of assembly, component of the cytochrome c oxidase (complex IV, CIV), a multisubunit enzyme composed of 14 subunits. The complex is composed of a catalytic core of 3 subunits MT-CO1, MT-CO2 and MT-CO3, encoded in the mitochondrial DNA, and 11 supernumerary subunits COX4I, COX5A, COX5B, COX6A, COX6B, COX6C, COX7A, COX7B, COX7C, COX8 and NDUFA4, which are encoded in the nuclear genome. The complex exists as a monomer or a dimer and forms supercomplexes (SCs) in the inner mitochondrial membrane with NADH-ubiquinone oxidoreductase (complex I, CI) and ubiquinol-cytochrome c oxidoreductase (cytochrome b-c1 complex, complex III, CIII), resulting in different assemblies (supercomplex SCI(1)III(2)IV(1) and megacomplex MCI(2)III(2)IV(2)). Found in a complex with TMEM177, COA6, COX18, COX20, SCO1 and SCO2. Interacts with TMEM177 in a COX20-dependent manner. Interacts with COX20. Interacts with COX16. It depends on Cu cation as a cofactor.

Its subcellular location is the mitochondrion inner membrane. The enzyme catalyses 4 Fe(II)-[cytochrome c] + O2 + 8 H(+)(in) = 4 Fe(III)-[cytochrome c] + 2 H2O + 4 H(+)(out). In terms of biological role, component of the cytochrome c oxidase, the last enzyme in the mitochondrial electron transport chain which drives oxidative phosphorylation. The respiratory chain contains 3 multisubunit complexes succinate dehydrogenase (complex II, CII), ubiquinol-cytochrome c oxidoreductase (cytochrome b-c1 complex, complex III, CIII) and cytochrome c oxidase (complex IV, CIV), that cooperate to transfer electrons derived from NADH and succinate to molecular oxygen, creating an electrochemical gradient over the inner membrane that drives transmembrane transport and the ATP synthase. Cytochrome c oxidase is the component of the respiratory chain that catalyzes the reduction of oxygen to water. Electrons originating from reduced cytochrome c in the intermembrane space (IMS) are transferred via the dinuclear copper A center (CU(A)) of subunit 2 and heme A of subunit 1 to the active site in subunit 1, a binuclear center (BNC) formed by heme A3 and copper B (CU(B)). The BNC reduces molecular oxygen to 2 water molecules using 4 electrons from cytochrome c in the IMS and 4 protons from the mitochondrial matrix. In Felis catus (Cat), this protein is Cytochrome c oxidase subunit 2 (MT-CO2).